A 185-amino-acid polypeptide reads, in one-letter code: MKSLLLTVTLSSLVATLQTYDDLPFISEEDKLSGVWFIKATVSQRREVEGETLVAFPIKFTCPEEGTLELRHTLASKGECINVGIRLQRTEEPGQYSAFWGHTLFYIYDLPVKDHYIIYCESHPFQKISQFGYLIGKYPEENQDTLEVFKEFIQHKGFLQEKIGVPEQRDRCIPIHDSAHQDHKC.

The N-terminal stretch at 1–19 is a signal peptide; that stretch reads MKSLLLTVTLSSLVATLQT. C80 and C172 are joined by a disulfide.

The protein belongs to the calycin superfamily. Lipocalin family. Specifically expressed in vomeronasal and posterior glands of the nasal septum, the ducts of which open into the lumen of the vomeronasal organ.

The protein resides in the secreted. Transport of lipophilic molecules, possible pheromone-carrier. This chain is Vomeronasal secretory protein 2 (Lcn4), found in Mus musculus (Mouse).